Here is a 356-residue protein sequence, read N- to C-terminus: Phosphoserine aminotransferase (356 aa).

Residue Arg41 coordinates L-glutamate. Pyridoxal 5'-phosphate contacts are provided by residues Ala75–Ser76, Trp99, Thr147, Asp166, and Gln189. The residue at position 190 (Lys190) is an N6-(pyridoxal phosphate)lysine. Asn231–Thr232 serves as a coordination point for pyridoxal 5'-phosphate.

It belongs to the class-V pyridoxal-phosphate-dependent aminotransferase family. SerC subfamily. Homodimer. The cofactor is pyridoxal 5'-phosphate.

The protein localises to the cytoplasm. The catalysed reaction is O-phospho-L-serine + 2-oxoglutarate = 3-phosphooxypyruvate + L-glutamate. It carries out the reaction 4-(phosphooxy)-L-threonine + 2-oxoglutarate = (R)-3-hydroxy-2-oxo-4-phosphooxybutanoate + L-glutamate. It participates in amino-acid biosynthesis; L-serine biosynthesis; L-serine from 3-phospho-D-glycerate: step 2/3. Its pathway is cofactor biosynthesis; pyridoxine 5'-phosphate biosynthesis; pyridoxine 5'-phosphate from D-erythrose 4-phosphate: step 3/5. Catalyzes the reversible conversion of 3-phosphohydroxypyruvate to phosphoserine and of 3-hydroxy-2-oxo-4-phosphonooxybutanoate to phosphohydroxythreonine. In Phocaeicola vulgatus (strain ATCC 8482 / DSM 1447 / JCM 5826 / CCUG 4940 / NBRC 14291 / NCTC 11154) (Bacteroides vulgatus), this protein is Phosphoserine aminotransferase.